The primary structure comprises 83 residues: uncharacterized protein (83 aa).

This is an uncharacterized protein from Vaccinia virus (strain Copenhagen) (VACV).